A 176-amino-acid polypeptide reads, in one-letter code: Inorganic pyrophosphatase (176 aa).

Positions 30, 44, and 56 each coordinate substrate. Positions 66, 71, and 103 each coordinate Mg(2+). Y140 serves as a coordination point for substrate.

It belongs to the PPase family. Homohexamer. The cofactor is Mg(2+).

The protein localises to the cytoplasm. The enzyme catalyses diphosphate + H2O = 2 phosphate + H(+). Functionally, catalyzes the hydrolysis of inorganic pyrophosphate (PPi) forming two phosphate ions. The chain is Inorganic pyrophosphatase from Methanothermobacter thermautotrophicus (strain ATCC 29096 / DSM 1053 / JCM 10044 / NBRC 100330 / Delta H) (Methanobacterium thermoautotrophicum).